The following is a 124-amino-acid chain: Heat-labile enterotoxin B chain (124 aa).

Positions 1-21 are cleaved as a signal peptide; it reads MNKVKCYVLFTALLSSLCAYG. A disulfide bond links Cys-30 and Cys-107.

As to quaternary structure, heterohexamer of one A chain and of five B chains.

The biological activity of the toxin is produced by the A chain, which activates intracellular adenyl cyclase. In Escherichia coli O78:H11 (strain H10407 / ETEC), this protein is Heat-labile enterotoxin B chain (eltB).